The chain runs to 555 residues: Formate--tetrahydrofolate ligase (555 aa).

Position 65–72 (65–72) interacts with ATP; the sequence is TPAGEGKT.

The protein belongs to the formate--tetrahydrofolate ligase family.

It catalyses the reaction (6S)-5,6,7,8-tetrahydrofolate + formate + ATP = (6R)-10-formyltetrahydrofolate + ADP + phosphate. It functions in the pathway one-carbon metabolism; tetrahydrofolate interconversion. The protein is Formate--tetrahydrofolate ligase of Paracoccus denitrificans (strain Pd 1222).